Here is an 815-residue protein sequence, read N- to C-terminus: Plakophilin-2 (815 aa).

Basic and acidic residues predominate over residues 1 to 12 (MLKPHPEHKEQP). Disordered regions lie at residues 1–31 (MLKPHPEHKEQPQDSFTPSGDSTPDASMAEE) and 76–105 (QLTLSRKKRKPKPADSSLAESQSSCQISSS). A compositionally biased stretch (polar residues) spans 13–25 (QDSFTPSGDSTPD). Positions 91-105 (SSLAESQSSCQISSS) are enriched in low complexity. ARM repeat units follow at residues 317 to 357 (KGKP…NQCF), 360 to 399 (PDAKRKILHLQGIPKLLKLMQNDSEELQWAAVSSLRNIVF), 402 to 442 (NENK…NLSS), 457 to 498 (PLTD…NLSS), 501 to 547 (PDGR…NLSY), 604 to 644 (PHGV…NLTA), 652 to 691 (AIAHFIVQKEGGLSQVKKLLQEAEKEELRISVSLLKNISR), 693 to 737 (RELH…NLSQ), and 740 to 783 (ASNT…TLWR).

The protein belongs to the beta-catenin family.

The protein resides in the nucleus. It localises to the cell junction. The protein localises to the desmosome. It is found in the cytoplasm. In terms of biological role, required for development of the heart, potentially via cell-cell adhesion and modulation of expression of cardiac precursor genes. Plays a role in desmosome cell-cell junctions and their intracellular connectivity. The polypeptide is Plakophilin-2 (Danio rerio (Zebrafish)).